The primary structure comprises 202 residues: ATP-dependent Clp protease proteolytic subunit (202 aa).

Residue serine 106 is the Nucleophile of the active site. Histidine 131 is a catalytic residue.

It belongs to the peptidase S14 family. In terms of assembly, fourteen ClpP subunits assemble into 2 heptameric rings which stack back to back to give a disk-like structure with a central cavity, resembling the structure of eukaryotic proteasomes.

Its subcellular location is the cytoplasm. The catalysed reaction is Hydrolysis of proteins to small peptides in the presence of ATP and magnesium. alpha-casein is the usual test substrate. In the absence of ATP, only oligopeptides shorter than five residues are hydrolyzed (such as succinyl-Leu-Tyr-|-NHMec, and Leu-Tyr-Leu-|-Tyr-Trp, in which cleavage of the -Tyr-|-Leu- and -Tyr-|-Trp bonds also occurs).. In terms of biological role, cleaves peptides in various proteins in a process that requires ATP hydrolysis. Has a chymotrypsin-like activity. Plays a major role in the degradation of misfolded proteins. This Methylibium petroleiphilum (strain ATCC BAA-1232 / LMG 22953 / PM1) protein is ATP-dependent Clp protease proteolytic subunit.